The chain runs to 171 residues: uncharacterized protein (171 aa).

The region spanning 33–166 is the HTH marR-type domain; the sequence is AISIATNLYR…LTGLLRKVAD (134 aa). The H-T-H motif DNA-binding region spans 80–103; that stretch reads TRKIAELSGISTATASNVIKTLEK.

This is an uncharacterized protein from Bacillus subtilis (strain 168).